Reading from the N-terminus, the 294-residue chain is Probable 2-(5''-triphosphoribosyl)-3'-dephosphocoenzyme-A synthase (294 aa).

Belongs to the CitG/MdcB family.

It carries out the reaction 3'-dephospho-CoA + ATP = 2'-(5''-triphospho-alpha-D-ribosyl)-3'-dephospho-CoA + adenine. The chain is Probable 2-(5''-triphosphoribosyl)-3'-dephosphocoenzyme-A synthase from Streptococcus pyogenes serotype M18 (strain MGAS8232).